Here is a 631-residue protein sequence, read N- to C-terminus: 1-deoxy-D-xylulose-5-phosphate synthase (631 aa).

Residues His87 and 128–130 (GHS) each bind thiamine diphosphate. Asp159 serves as a coordination point for Mg(2+). Residues 160-161 (GA), Asn188, Phe295, and Glu377 contribute to the thiamine diphosphate site. Asn188 provides a ligand contact to Mg(2+).

The protein belongs to the transketolase family. DXPS subfamily. As to quaternary structure, homodimer. Mg(2+) is required as a cofactor. Thiamine diphosphate serves as cofactor.

The enzyme catalyses D-glyceraldehyde 3-phosphate + pyruvate + H(+) = 1-deoxy-D-xylulose 5-phosphate + CO2. Its pathway is metabolic intermediate biosynthesis; 1-deoxy-D-xylulose 5-phosphate biosynthesis; 1-deoxy-D-xylulose 5-phosphate from D-glyceraldehyde 3-phosphate and pyruvate: step 1/1. Its function is as follows. Catalyzes the acyloin condensation reaction between C atoms 2 and 3 of pyruvate and glyceraldehyde 3-phosphate to yield 1-deoxy-D-xylulose-5-phosphate (DXP). This chain is 1-deoxy-D-xylulose-5-phosphate synthase, found in Pseudomonas putida (strain ATCC 47054 / DSM 6125 / CFBP 8728 / NCIMB 11950 / KT2440).